Reading from the N-terminus, the 387-residue chain is 3-ketoacyl-CoA thiolase (387 aa).

The active-site Acyl-thioester intermediate is Cys-91. Catalysis depends on proton acceptor residues His-343 and Cys-373.

Belongs to the thiolase-like superfamily. Thiolase family. Heterotetramer of two alpha chains (FadB) and two beta chains (FadA).

The protein localises to the cytoplasm. It carries out the reaction an acyl-CoA + acetyl-CoA = a 3-oxoacyl-CoA + CoA. The protein operates within lipid metabolism; fatty acid beta-oxidation. Its function is as follows. Catalyzes the final step of fatty acid oxidation in which acetyl-CoA is released and the CoA ester of a fatty acid two carbons shorter is formed. This chain is 3-ketoacyl-CoA thiolase, found in Aliivibrio salmonicida (strain LFI1238) (Vibrio salmonicida (strain LFI1238)).